The sequence spans 204 residues: Somatotropin (204 aa).

The first 17 residues, Met1–Ser17, serve as a signal peptide directing secretion. Gln18 is modified (pyrrolidone carboxylic acid). His36 provides a ligand contact to Zn(2+). An intrachain disulfide couples Cys69 to Cys177. Glu186 lines the Zn(2+) pocket. A disulfide bridge connects residues Cys194 and Cys202.

This sequence belongs to the somatotropin/prolactin family.

The protein localises to the secreted. Functionally, growth hormone plays an important role in growth control and is involved in the regulation of several anabolic processes. Implicated as an osmoregulatory substance important for seawater adaptation. The sequence is that of Somatotropin (gh) from Acanthopagrus butcheri (Australian black bream).